The chain runs to 133 residues: uncharacterized protein (133 aa).

This is an uncharacterized protein from Escherichia coli O157:H7.